We begin with the raw amino-acid sequence, 211 residues long: Uridine kinase (211 aa).

12–19 (GGSGSGKT) provides a ligand contact to ATP.

Belongs to the uridine kinase family.

The protein resides in the cytoplasm. It catalyses the reaction uridine + ATP = UMP + ADP + H(+). The enzyme catalyses cytidine + ATP = CMP + ADP + H(+). Its pathway is pyrimidine metabolism; CTP biosynthesis via salvage pathway; CTP from cytidine: step 1/3. The protein operates within pyrimidine metabolism; UMP biosynthesis via salvage pathway; UMP from uridine: step 1/1. This Anoxybacillus flavithermus (strain DSM 21510 / WK1) protein is Uridine kinase.